A 257-amino-acid polypeptide reads, in one-letter code: uncharacterized protein (257 aa).

A helical transmembrane segment spans residues 7 to 27 (LMLGICLVLLIILIVGYVIMT).

The protein belongs to the staphylococcal tandem lipoprotein family.

It localises to the cell membrane. This is an uncharacterized protein from Staphylococcus aureus (strain Mu50 / ATCC 700699).